Reading from the N-terminus, the 359-residue chain is Cytosolic sulfotransferase 15 (359 aa).

Residue 101–106 (KSGTTW) participates in 3'-phosphoadenylyl sulfate binding. Histidine 168 (proton acceptor) is an active-site residue. Residues arginine 190, serine 198, tyrosine 256, and 322–324 (RKG) each bind 3'-phosphoadenylyl sulfate.

This sequence belongs to the sulfotransferase 1 family. In terms of tissue distribution, expressed in leaves.

It is found in the cytoplasm. The catalysed reaction is a 12-hydroxyjasmonate + 3'-phosphoadenylyl sulfate = a 12-sulfojasmonate + adenosine 3',5'-bisphosphate + H(+). Its function is as follows. Sulfotransferase that utilizes 3'-phospho-5'-adenylyl sulfate (PAPS) as sulfonate donor to specifically catalyze the sulfate conjugation of hydroxyjasmonates, with a preference for 12-hydroxyjasmonate over 11-hydroxyjasmonate. No activity with 12-hydroxyjasmonic acid methyl ester, cucurbic acid, 7-iso-cucurbic acid, 6-epi-cucurbic acid, 6-epi-7-iso-cucurbic acid and their methyl esters, prostaglandin E2, arachidonyl alcohol and 11-eicosenol. The sequence is that of Cytosolic sulfotransferase 15 (SOT15) from Arabidopsis thaliana (Mouse-ear cress).